We begin with the raw amino-acid sequence, 527 residues long: Putative transcription factor p65 homolog (527 aa).

One can recognise an RHD domain in the interval 18 to 306; that stretch reads PPVEIIEQPK…HIDEKRKRTL (289 aa). S276 is modified (phosphoserine; by PKA). The short motif at 301–304 is the Nuclear localization signal element; sequence KRKR. Transcriptional activation domain stretches follow at residues 381–444 and 494–527; these read ISDF…DFSQ and DSGLINGMFDISREEIHLTSLFELDFSSLLSNMK. The short motif at 513–521 is the 9aaTAD element; the sequence is SLFELDFSS.

As to expression, predominantly in the animal hemisphere of the oocyte; all tissues of early embryo.

The protein resides in the nucleus. The protein localises to the cytoplasm. Functionally, NF-kappa-B is a pleiotropic transcription factor present in almost all cell types and is the endpoint of a series of signal transduction events that are initiated by a vast array of stimuli related to many biological processes such as inflammation, immunity, differentiation, cell growth, tumorigenesis and apoptosis. NF-kappa-B is a homo- or heterodimeric complex formed by the Rel-like domain-containing proteins. The dimers bind at kappa-B sites in the DNA of their target genes and the individual dimers have distinct preferences for different kappa-B sites that they can bind with distinguishable affinity and specificity. Different dimer combinations act as transcriptional activators or repressors, respectively. NF-kappa-B is controlled by various mechanisms of post-translational modification and subcellular compartmentalization as well as by interactions with other cofactors or corepressors. NF-kappa-B complexes are held in the cytoplasm in an inactive state complexed with members of the NF-kappa-B inhibitor (I-kappa-B) family. In a conventional activation pathway, I-kappa-B is phosphorylated by I-kappa-B kinases (IKKs) in response to different activators, subsequently degraded thus liberating the active NF-kappa-B complex which translocates to the nucleus. RELA shows a weak DNA-binding site which could contribute directly to DNA binding in the NF-kappa-B complex. The sequence is that of Putative transcription factor p65 homolog (rela) from Xenopus laevis (African clawed frog).